A 384-amino-acid chain; its full sequence is Putative ankyrin repeat protein L72 (384 aa).

ANK repeat units follow at residues A88–N117, G119–S146, D171–V200, D202–S231, N233–N261, I298–K324, and P325–V357.

In Acanthamoeba polyphaga (Amoeba), this protein is Putative ankyrin repeat protein L72.